The following is a 255-amino-acid chain: Putative cysteine-rich repeat secretory protein 32 (255 aa).

The N-terminal stretch at 1-28 (MYSSYSLFKCLVCFYILGIQVLIHSVSS) is a signal peptide. Gnk2-homologous domains follow at residues 35 to 136 (YLHH…TINS) and 143 to 252 (YENT…LYPF).

Belongs to the cysteine-rich repeat secretory protein family.

The protein resides in the secreted. This chain is Putative cysteine-rich repeat secretory protein 32 (CRRSP32), found in Arabidopsis thaliana (Mouse-ear cress).